We begin with the raw amino-acid sequence, 247 residues long: GTP cyclohydrolase 1 type 2 homolog (247 aa).

Positions 63, 64, 101, 215, and 219 each coordinate a divalent metal cation.

This sequence belongs to the GTP cyclohydrolase I type 2/NIF3 family. Toroid-shaped homohexamer. In the hexamer, 3 dimers assemble to form a ring-like structure surrounding a central hole.

In terms of biological role, provides significant protection from radiation damage and may be involved in the degradation of radiation-damaged nucleotides. The sequence is that of GTP cyclohydrolase 1 type 2 homolog (ybgI) from Salmonella typhi.